The sequence spans 2255 residues: Defense against restriction protein B (2255 aa).

Residues 841-1126 (VRRLSEDGRG…YNMLSHVLPK (286 aa)) form the Helicase ATP-binding domain. 854–861 (FGTGLGKT) is a binding site for ATP. Positions 1052-1055 (DEGH) match the DEAH box motif. Positions 1198-1234 (ELDEHQQDAPLTEEQLAAYEELRQQAEAAAKANNGVT) form a coiled coil. In terms of domain architecture, Helicase C-terminal spans 1383 to 1568 (KLKRIICNAL…EMENADANDM (186 aa)). Residues 1617-1654 (HAAGEDVEVLTAELERSKAELEKTTAEVAKFKQAVMAK) adopt a coiled-coil conformation.

The protein belongs to the helicase family.

Its subcellular location is the virion. In terms of biological role, capsid internal protein that is probably ejected along with the viral DNA and prevents degradation of viral DNA by the host EcoB and EcoK restriction-modification antiviral defense systems. This Escherichia phage P1 (Bacteriophage P1) protein is Defense against restriction protein B.